A 159-amino-acid chain; its full sequence is Siroheme decarboxylase beta subunit (159 aa).

152–157 (KTSMTY) serves as a coordination point for substrate.

The protein belongs to the Ahb/Nir family. In terms of assembly, forms a heterodimer composed of AhbA and AhbB.

It carries out the reaction siroheme + 2 H(+) = 12,18-didecarboxysiroheme + 2 CO2. It participates in porphyrin-containing compound metabolism; protoheme biosynthesis. Involved in siroheme-dependent heme b biosynthesis. Catalyzes the decarboxylation of siroheme into didecarboxysiroheme. Siroheme is decarboxylated to monodecarboxysiroheme, which is in turn decarboxylated to didecarboxysiroheme. This chain is Siroheme decarboxylase beta subunit, found in Desulfovibrio desulfuricans (strain ATCC 27774 / DSM 6949 / MB).